A 159-amino-acid polypeptide reads, in one-letter code: Mitotic-spindle organizing protein 2 (159 aa).

A disordered region spans residues 87-159 (LASDPQDSVP…SGKSNSRSSP (73 aa)). The segment covering 91-105 (PQDSVPISLSTSTSE) has biased composition (polar residues). Arginine 111 bears the Omega-N-methylarginine mark. Position 153 is a phosphoserine (serine 153).

It belongs to the MOZART2 family. Associates with the gamma-tubulin ring complex (gTuRC) consisting of TUBGCP2, TUBGCP3, TUBGCP4, TUBGCP5 and TUBGCP6 and gamma-tubulin TUBG1 or TUBG2; within the complex, interacts with TUBGCP2; the interaction plays a role in gTuRC activation.

The protein localises to the cytoplasm. The protein resides in the cytoskeleton. Its subcellular location is the microtubule organizing center. It is found in the centrosome. It localises to the spindle. Functionally, required for the recruitment and the assembly of the gamma-tubulin ring complex (gTuRC) at the centrosome. The gTuRC regulates the minus-end nucleation of alpha-beta tubulin heterodimers that grow into microtubule protafilaments, a critical step in centrosome duplication and spindle formation. The polypeptide is Mitotic-spindle organizing protein 2 (Mzt2) (Mus musculus (Mouse)).